The chain runs to 418 residues: Gamma-glutamyl phosphate reductase (418 aa).

This sequence belongs to the gamma-glutamyl phosphate reductase family.

Its subcellular location is the cytoplasm. The catalysed reaction is L-glutamate 5-semialdehyde + phosphate + NADP(+) = L-glutamyl 5-phosphate + NADPH + H(+). Its pathway is amino-acid biosynthesis; L-proline biosynthesis; L-glutamate 5-semialdehyde from L-glutamate: step 2/2. In terms of biological role, catalyzes the NADPH-dependent reduction of L-glutamate 5-phosphate into L-glutamate 5-semialdehyde and phosphate. The product spontaneously undergoes cyclization to form 1-pyrroline-5-carboxylate. The sequence is that of Gamma-glutamyl phosphate reductase from Histophilus somni (strain 2336) (Haemophilus somnus).